The following is a 610-amino-acid chain: Sterol O-acyltransferase 1 (610 aa).

S21 and S45 each carry phosphoserine. A disordered region spans residues 41 to 81; that stretch reads SMEVSPRSSTTSLVEPVESTEGVESTEAERVAGKQEQEEEY. Over residues 67–76 the composition is skewed to basic and acidic residues; it reads EAERVAGKQE. The next 5 helical transmembrane spans lie at 182–202, 229–249, 264–284, 371–391, and 409–429; these read LESNFSGIYVFAWMFLGWIAI, LFTIAMLDLAMFLCTFFVVFV, GFVAVSIFELAFIPVTFPIYV, ISCSNFFMFCLFPVLVYQINY, and IIGTIFLMMVTAQFFMHPVAM. An FYXDWWN motif motif is present at residues 491 to 497; that stretch reads FYGDWWN. Helical transmembrane passes span 535–555 and 590–610; these read ATLFTFFLSAVFHEMAMFAIF and VVFSFGVCSGPSIIMTLYLTL. H547 is a catalytic residue.

The protein belongs to the membrane-bound acyltransferase family. Sterol o-acyltransferase subfamily.

It localises to the endoplasmic reticulum membrane. The enzyme catalyses lanosterol + an acyl-CoA = lanosteryl ester + CoA. Functionally, sterol O-acyltransferase that catalyzes the formation of stery esters. The chain is Sterol O-acyltransferase 1 from Saccharomyces cerevisiae (strain ATCC 204508 / S288c) (Baker's yeast).